A 266-amino-acid chain; its full sequence is Tryptophan synthase alpha chain (266 aa).

Catalysis depends on proton acceptor residues Glu-49 and Asp-60.

The protein belongs to the TrpA family. In terms of assembly, tetramer of two alpha and two beta chains.

It carries out the reaction (1S,2R)-1-C-(indol-3-yl)glycerol 3-phosphate + L-serine = D-glyceraldehyde 3-phosphate + L-tryptophan + H2O. The protein operates within amino-acid biosynthesis; L-tryptophan biosynthesis; L-tryptophan from chorismate: step 5/5. Functionally, the alpha subunit is responsible for the aldol cleavage of indoleglycerol phosphate to indole and glyceraldehyde 3-phosphate. This chain is Tryptophan synthase alpha chain, found in Shewanella amazonensis (strain ATCC BAA-1098 / SB2B).